A 1250-amino-acid chain; its full sequence is SRC kinase signaling inhibitor 1 (1250 aa).

A compositionally biased stretch (basic and acidic residues) spans 19 to 45 (AEGRARSPREEVGPRDPGGRGEPDPER). The tract at residues 19–78 (AEGRARSPREEVGPRDPGGRGEPDPERSSPPMLSADDAEYPREYRTLGGGGGGGSGGRRF) is disordered. S47 and S52 each carry phosphoserine. Gly residues predominate over residues 65–75 (LGGGGGGGSGG). A Phosphoserine modification is found at S79. T86 is modified (phosphothreonine). Residues S87, S98, S211, S233, S237, S247, and S293 each carry the phosphoserine modification. Y309 is subject to Phosphotyrosine. Residues 352 to 448 (ASRESSPTRR…RRDVKPDEDL (97 aa)) form a disordered region. The span at 354–364 (RESSPTRRLNN) shows a compositional bias: polar residues. Residues 365 to 374 (LSPASHLASS) are compositionally biased toward low complexity. Residues S366, S375, and S392 each carry the phosphoserine modification. The span at 381–399 (PSGLPSGLPSGSPSRSRLS) shows a compositional bias: low complexity. Omega-N-methylarginine is present on residues R397 and R404. 3 positions are modified to phosphoserine: S411, S430, and S432. A compositionally biased stretch (basic and acidic residues) spans 437–448 (LERRDVKPDEDL). Y464 bears the Phosphotyrosine mark. The tract at residues 538–710 (PSSPQKLADV…ASSTPAGQPT (173 aa)) is disordered. Residues 552-563 (GGPPPPHSPYSG) are compositionally biased toward pro residues. Phosphoserine is present on residues S559, S562, and S566. Residue R567 is modified to Omega-N-methylarginine. Residues S569, S579, S581, S583, and S588 each carry the phosphoserine modification. Over residues 590–607 (GGKARSTGSASTAGAPPS) the composition is skewed to low complexity. Residues 628–640 (KDTETRERMEAME) are compositionally biased toward basic and acidic residues. A phosphoserine mark is found at S664 and S688. Phosphothreonine occurs at positions 691 and 704. Over residues 701–710 (ASSTPAGQPT) the composition is skewed to low complexity. Coiled-coil stretches lie at residues 712–753 (VSRL…RALL) and 793–813 (EELITQQLNDLEKSVEKIQRD). The tract at residues 714 to 764 (RLQMQLHLRGLQNSASDLRGQLQQLRNVQLQNQESVRALLKPTEADVSMRV) is interaction with SNAP25. S911 and S933 each carry phosphoserine. Disordered regions lie at residues 924–982 (GLDF…ERDW) and 1016–1094 (DCAS…TGEV). T951 is modified (phosphothreonine). Residue S1054 is modified to Phosphoserine. The segment covering 1069–1078 (KSPPPPPPRR) has biased composition (pro residues). 2 positions are modified to phosphoserine: S1110 and S1127. Residues 1155 to 1250 (ELESGGSSVP…FGARNSSISF (96 aa)) are disordered. The segment covering 1217–1250 (PNETSSPGSEKPSGSRTSIPVLTSFGARNSSISF) has biased composition (polar residues).

Belongs to the SRCIN1 family. In terms of assembly, interacts with the N-terminal coiled-coil region of SNAP25. Interacts with BCAR1/p130Cas and SRC through its C-terminal domain. Interacts with CSK, CTTN, SORBS3/vinexin, SYP and MAPRE3/EB3. In terms of processing, tyrosine-phosphorylated in response to EGF and to cell adhesion to integrin ligands. Expressed predominantly in central nervous system with high levels detected in cortex, cerebellum, midbrain and spinal cord (at protein level). Also expressed in testis and epithelial-rich tissues such as mammary gland, lung and kidney.

It localises to the cytoplasm. The protein localises to the cytoskeleton. The protein resides in the cell projection. It is found in the axon. Its subcellular location is the dendrite. It localises to the presynapse. The protein localises to the postsynapse. The protein resides in the postsynaptic density. Functionally, acts as a negative regulator of SRC by activating CSK which inhibits SRC activity and downstream signaling, leading to impaired cell spreading and migration. Regulates dendritic spine morphology. Involved in calcium-dependent exocytosis. May play a role in neurotransmitter release or synapse maintenance. The polypeptide is SRC kinase signaling inhibitor 1 (Srcin1) (Mus musculus (Mouse)).